The primary structure comprises 64 residues: Large ribosomal subunit protein bL28 (64 aa).

This sequence belongs to the bacterial ribosomal protein bL28 family.

The polypeptide is Large ribosomal subunit protein bL28 (Syntrophobacter fumaroxidans (strain DSM 10017 / MPOB)).